The chain runs to 344 residues: Anthranilate phosphoribosyltransferase (344 aa).

5-phospho-alpha-D-ribose 1-diphosphate is bound by residues G84, G87–D88, T92, N94–T97, K112–S120, and S124. G84 is a binding site for anthranilate. S96 is a Mg(2+) binding site. Residue N115 participates in anthranilate binding. Anthranilate is bound at residue R170. Mg(2+) contacts are provided by D229 and E230.

This sequence belongs to the anthranilate phosphoribosyltransferase family. Homodimer. Mg(2+) serves as cofactor.

The enzyme catalyses N-(5-phospho-beta-D-ribosyl)anthranilate + diphosphate = 5-phospho-alpha-D-ribose 1-diphosphate + anthranilate. The protein operates within amino-acid biosynthesis; L-tryptophan biosynthesis; L-tryptophan from chorismate: step 2/5. Its function is as follows. Catalyzes the transfer of the phosphoribosyl group of 5-phosphorylribose-1-pyrophosphate (PRPP) to anthranilate to yield N-(5'-phosphoribosyl)-anthranilate (PRA). This Xylella fastidiosa (strain 9a5c) protein is Anthranilate phosphoribosyltransferase.